Here is a 334-residue protein sequence, read N- to C-terminus: Mevalonate kinase (334 aa).

Residue 110–120 participates in ATP binding; sequence PVGAGLGSSAA. The active-site Proton acceptor is Asp161.

It belongs to the GHMP kinase family. Mevalonate kinase subfamily. Homodimer. Mg(2+) is required as a cofactor.

It is found in the cytoplasm. It catalyses the reaction (R)-mevalonate + ATP = (R)-5-phosphomevalonate + ADP + H(+). It participates in isoprenoid biosynthesis; isopentenyl diphosphate biosynthesis via mevalonate pathway; isopentenyl diphosphate from (R)-mevalonate: step 1/3. Catalyzes the phosphorylation of (R)-mevalonate (MVA) to (R)-mevalonate 5-phosphate (MVAP). Functions in the mevalonate (MVA) pathway leading to isopentenyl diphosphate (IPP), a key precursor for the biosynthesis of isoprenoid compounds such as archaeal membrane lipids. In Thermococcus onnurineus (strain NA1), this protein is Mevalonate kinase.